The primary structure comprises 192 residues: Adenylate kinase (192 aa).

An ATP-binding site is contributed by 10–18 (GVPGVGGTT).

This sequence belongs to the archaeal adenylate kinase family. As to quaternary structure, monomer.

It localises to the cytoplasm. The enzyme catalyses AMP + ATP = 2 ADP. The polypeptide is Adenylate kinase (adkA) (Methanothermococcus thermolithotrophicus (Methanococcus thermolithotrophicus)).